The following is a 308-amino-acid chain: Methionyl-tRNA formyltransferase (308 aa).

A (6S)-5,6,7,8-tetrahydrofolate-binding site is contributed by 109-112 (SLLP).

Belongs to the Fmt family.

It catalyses the reaction L-methionyl-tRNA(fMet) + (6R)-10-formyltetrahydrofolate = N-formyl-L-methionyl-tRNA(fMet) + (6S)-5,6,7,8-tetrahydrofolate + H(+). Its function is as follows. Attaches a formyl group to the free amino group of methionyl-tRNA(fMet). The formyl group appears to play a dual role in the initiator identity of N-formylmethionyl-tRNA by promoting its recognition by IF2 and preventing the misappropriation of this tRNA by the elongation apparatus. This is Methionyl-tRNA formyltransferase from Caulobacter vibrioides (strain NA1000 / CB15N) (Caulobacter crescentus).